The sequence spans 217 residues: LSM12 homolog A (217 aa).

The region spanning 9–78 is the Sm domain; that stretch reads VNAVNDCFSI…CSNVQVIKEC (70 aa). An AD domain is found at 86-184; the sequence is QKLNLEQVKM…IIKQFFNTRP (99 aa). A disordered region spans residues 185 to 217; that stretch reads SPVPESGAAASTSSPSVSPTSSSLASGSPVPAN. Residues 190 to 217 show a composition bias toward low complexity; sequence SGAAASTSSPSVSPTSSSLASGSPVPAN.

This sequence belongs to the LSM12 family. Component of the Atx2-tyf activator complex, composed of Atx2, tyf, pAbp, Lsm12a. Interacts with tyf, Atx2 and pAbp.

Component of the Atx2-tyf activator complex which functions in the circadian pacemaker neurons to activate the TYF-dependent translation of per and maintain 24 hour periodicity in circadian behaviors. Within the Atx2-tyf complex, likely to function as a molecular adapter which stabilizes the interaction between Atx2 and the translational regulator tyf. In Drosophila melanogaster (Fruit fly), this protein is LSM12 homolog A.